Here is a 118-residue protein sequence, read N- to C-terminus: MSTSSMALAAYRNGLRATKVAFGQDLRMLQAARSKMREGMANPPNPELAPEQQIQHLNEVSQFLRRNIVQGKRGEGDKYTLNIHKETELGDNETIKTTKKTLVSRGGGCCGGGQGLYK.

The protein belongs to the complex I LYR family. MZM1 subfamily. Interacts with RIP1.

It localises to the mitochondrion matrix. Its function is as follows. Assembly factor required for Rieske Fe-S protein RIP1 incorporation into the cytochrome b-c1 (CIII) complex. Functions as a chaperone, binding to this subunit within the mitochondrial matrix and stabilizing it prior to its translocation and insertion into the late CIII dimeric intermediate within the mitochondrial inner membrane. Modulates the mitochondrial matrix zinc pool. The chain is Mitochondrial zinc maintenance protein 1, mitochondrial (MZM1) from Lachancea thermotolerans (strain ATCC 56472 / CBS 6340 / NRRL Y-8284) (Yeast).